The sequence spans 1158 residues: Transient receptor potential cation channel subfamily M member 5 (1158 aa).

Residues 1–729 are Cytoplasmic-facing; sequence MQTTQSSCPG…LTRWRKFWGA (729 aa). Ser-129 bears the Phosphoserine; by PKC mark. Positions 341, 350, 353, and 354 each coordinate Ca(2+). A disordered region spans residues 488–507; sequence GRRMEERGPPKRPAGQKWLP. Residues 552-572 adopt a coiled-coil conformation; sequence KIIKEMSHLEKEAEVARTMRE. A helical membrane pass occupies residues 730-754; the sequence is PVTVFLGNVVMYFAFLFLFTYVLLV. The Extracellular portion of the chain corresponds to 755-764; it reads DFRPPPQGPS. A helical membrane pass occupies residues 765–784; it reads GSEVTLYFWVFTLVLEEIRQ. Ca(2+) is bound by residues Glu-781 and Gln-784. Residues 785–805 are Cytoplasmic-facing; sequence GFFTDEDTHLVKKFTLYVEDN. A helical membrane pass occupies residues 806–824; the sequence is WNKCDMVAIFLFIVGVTCR. Positions 807 and 810 each coordinate Ca(2+). At 825–831 the chain is on the extracellular side; the sequence is MVPSVFE. A helical membrane pass occupies residues 832–854; it reads AGRTVLAIDFMVFTLRLIHIFAI. The Cytoplasmic portion of the chain corresponds to 855–863; the sequence is HKQLGPKII. The chain crosses the membrane as a helical span at residues 864 to 893; it reads IVERMMKDVFFFLFFLSVWLVAYGVTTQAL. Residues 894 to 902 are Extracellular-facing; that stretch reads LHPHDGRLE. Residues 903 to 938 constitute an intramembrane region (pore-forming); sequence WIFRRVLYRPYLQIFGQIPLDEIDEARVNCSLHPLL. The Selectivity filter motif lies at 917-919; sequence FGQ. Over 939-950 the chain is Extracellular; the sequence is LESSASCPNLYA. Residues 951-985 form a helical membrane-spanning segment; the sequence is NWLVILLLVTFLLVTNVLLMNLLIAMFSYTFQVVQ. Residues 986-1158 are Cytoplasmic-facing; that stretch reads GNADMFWKFQ…LESGLPPSDT (173 aa). Glu-1002 lines the Ca(2+) pocket. The segment covering 1127-1141 has biased composition (polar residues); that stretch reads TYSSSQNCGCRSQPA. Residues 1127-1158 form a disordered region; sequence TYSSSQNCGCRSQPASARDREYLESGLPPSDT.

The protein belongs to the transient receptor (TC 1.A.4) family. LTrpC subfamily. TRPM5 sub-subfamily. Homotetramer. Multiple phosphorylation sites regulate the Gq/ TRPM5 modulation axis, with the Ser-129 playing a substantial role in this positive modulation. In terms of tissue distribution, strongly expressed in liver, heart, testis, brain and kidney. Detected in fetal liver, kidney, spleen, brain, heart and lung, and in adult skin, eyes, spleen, stomach, small intestine, colon, lung, bladder, pancreas and thymus. Biallelically expressed at all stages and tissues examined. Also expressed in subsets of taste receptor cells of the tongue, in olfactory sensory neurons of the main olfactory epithelium and in the vomeronasal organ.

The protein resides in the cell membrane. The enzyme catalyses Na(+)(in) = Na(+)(out). The catalysed reaction is K(+)(in) = K(+)(out). Ca(2+)-activated cation channel. Displays voltage dependence modulation. Regulated by PI(4,5)P2 levels. PI(4,5)P 2 reverses the Ca(2+) -induced desensitization of channels. Inhibited by flufenamic acid with an IC(50) of 24.5 uM and spermine with an IC(50) of 37 uM. Is a highly temperature-sensitive, heat activated channel showing a steep increase of inward currents at temperatures between 15 and 35 degrees Celsius. Heat activation is due to a shift of the voltage-dependent activation curve to negative potentials. The channel is blocked by extracellular acidification. Its function is as follows. Monovalent cation-selective ion channel activated by intracellular Ca(2+) in a voltage- and temperature-dependent manner. Mediates the transport of Na(+), K(+) and Cs(+) ions equally well. Activated directly by increase in intracellular Ca(2+), but is impermeable to it. The activation mechanism of TRPM5 involves a multistep process. TRPM5 activation involves ligand binding (i.e., tastant molecule, glucose stimulation) to Gq/G-protein coupled receptors (GPCR) and leads to the breakdown of phosphatidylinositol bisphosphate (PIP2) into diacylglycerol (DAG) and inositol trisphosphate (IP3), IP3 binds to its receptors in the endoplasmic reticulum and cause Ca(2+) release. Simultaneously with the intracellular Ca(2+) release, DAG activates the protein kinase C (PKC), which phosphorylates the TRPM5 channel. This phosphorylation combined with the bound Ca(2+), leads to a robust inward current allowing the entry of sodium ions (Na+) into the cell. This ion influx depolarizes the cell membrane, generating action potentials that propagate TRPM5 signals. Is a key player in sensing sweet, umami and bitter stimuli. May also be involved in sensing semiochemicals. Involved in insulin secretion by pancreatic beta cells. The protein is Transient receptor potential cation channel subfamily M member 5 of Mus musculus (Mouse).